The sequence spans 555 residues: Potassium-transporting ATPase potassium-binding subunit (555 aa).

The next 10 membrane-spanning stretches (helical) occupy residues 2–22, 60–80, 130–150, 173–193, 246–266, 278–298, 374–394, 412–432, 483–503, and 525–545; these read IWVA…PTGI, QYAL…YFIF, IGIT…VMAF, VFLP…VPQT, MSNI…PFTY, ILFV…TTSE, AGFV…GLMV, LIAV…ALAL, LVMF…AASL, and GIFI…MLVL.

The protein belongs to the KdpA family. In terms of assembly, the system is composed of three essential subunits: KdpA, KdpB and KdpC.

The protein resides in the cell membrane. Its function is as follows. Part of the high-affinity ATP-driven potassium transport (or Kdp) system, which catalyzes the hydrolysis of ATP coupled with the electrogenic transport of potassium into the cytoplasm. This subunit binds the extracellular potassium ions and delivers the ions to the membrane domain of KdpB through an intramembrane tunnel. In Bacillus cereus (strain 03BB102), this protein is Potassium-transporting ATPase potassium-binding subunit.